The sequence spans 488 residues: Annexin A7 (488 aa).

Pro residues predominate over residues 1–18 (MSYPGYPPTGYPPFPGYP). Disordered regions lie at residues 1–49 (MSYP…YPQV) and 71–143 (GYPG…PTYP). The interval 1–143 (MSYPGYPPTG…QYPGGQPTYP (143 aa)) is repeat-rich region. A 3 X 5 AA tandem repeats of G-Y-P-P-X region spans residues 5–20 (GYPPTGYPPFPGYPPA). Over residues 89 to 102 (PGQGFGVPPGGAGF) the composition is skewed to gly residues. Annexin repeat units follow at residues 185–256 (FDAI…ALFM), 257–328 (PPTY…SMCQ), 340–412 (QMAQ…TILQ), and 416–487 (NRPA…AIVG). N6-acetyllysine is present on Lys-233.

Belongs to the annexin family. Interacts with PDCD6. Isoform 1 is expressed in brain, heart and skeletal muscle. Isoform 2 is more abundant in liver, lung, kidney, spleen, fibroblasts and placenta.

Its function is as follows. Calcium/phospholipid-binding protein which promotes membrane fusion and is involved in exocytosis. This Homo sapiens (Human) protein is Annexin A7 (ANXA7).